The chain runs to 187 residues: Large ribosomal subunit protein uL6 (187 aa).

The protein belongs to the universal ribosomal protein uL6 family. Part of the 50S ribosomal subunit.

Functionally, this protein binds to the 23S rRNA, and is important in its secondary structure. It is located near the subunit interface in the base of the L7/L12 stalk, and near the tRNA binding site of the peptidyltransferase center. The polypeptide is Large ribosomal subunit protein uL6 (Thermosynechococcus vestitus (strain NIES-2133 / IAM M-273 / BP-1)).